The chain runs to 216 residues: UPF0502 protein Spea_2482 (216 aa).

It belongs to the UPF0502 family.

This is UPF0502 protein Spea_2482 from Shewanella pealeana (strain ATCC 700345 / ANG-SQ1).